The chain runs to 365 residues: tRNA/tmRNA (uracil-C(5))-methyltransferase (365 aa).

Residues Gln-189, Tyr-217, Asn-222, Glu-238, and Asp-298 each contribute to the S-adenosyl-L-methionine site. Catalysis depends on Cys-323, which acts as the Nucleophile. Glu-357 (proton acceptor) is an active-site residue.

This sequence belongs to the class I-like SAM-binding methyltransferase superfamily. RNA M5U methyltransferase family. TrmA subfamily.

It catalyses the reaction uridine(54) in tRNA + S-adenosyl-L-methionine = 5-methyluridine(54) in tRNA + S-adenosyl-L-homocysteine + H(+). The enzyme catalyses uridine(341) in tmRNA + S-adenosyl-L-methionine = 5-methyluridine(341) in tmRNA + S-adenosyl-L-homocysteine + H(+). Dual-specificity methyltransferase that catalyzes the formation of 5-methyluridine at position 54 (m5U54) in all tRNAs, and that of position 341 (m5U341) in tmRNA (transfer-mRNA). The sequence is that of tRNA/tmRNA (uracil-C(5))-methyltransferase from Shewanella sp. (strain W3-18-1).